We begin with the raw amino-acid sequence, 779 residues long: Filament-like plant protein 1 (779 aa).

The span at 1–14 shows a compositional bias: basic and acidic residues; the sequence is MEKRKRESSERSFG. Disordered regions lie at residues 1–55, 253–274, and 315–336; these read MEKR…ETEK, ASFNDHRSTDSHSDGGERMDVS, and PETPDGNGKSGPESVTEEVVVP. Residues 47-200 adopt a coiled-coil conformation; it reads VSLEVETEKE…KENVMLRHEL (154 aa). A compositionally biased stretch (basic and acidic residues) spans 256–272; the sequence is NDHRSTDSHSDGGERMD. Residues 324–336 are compositionally biased toward low complexity; sequence SGPESVTEEVVVP. A coiled-coil region spans residues 337–674; that stretch reads SENSLASEIE…ANCQKTIASL (338 aa). Over residues 718 to 731 the composition is skewed to basic and acidic residues; that stretch reads FMTRNHPESIKPTK. Positions 718–764 are disordered; the sequence is FMTRNHPESIKPTKETSPSSSSSTASAAVSMPVSTNRGSSEKNRNGF. The segment covering 733–752 has biased composition (low complexity); that stretch reads TSPSSSSSTASAAVSMPVST.

This sequence belongs to the FPP family. In terms of assembly, interacts with WPP/MAF proteins.

This chain is Filament-like plant protein 1 (FPP1), found in Arabidopsis thaliana (Mouse-ear cress).